The sequence spans 268 residues: Mediator of RNA polymerase II transcription subunit 8 (268 aa).

Positions 1–29 form a coiled coil; that stretch reads MQREEKQLEASLDALLNQVADLKNSLGSF. Position 82 is a phosphoserine (serine 82). Residues 133 to 163 adopt a coiled-coil conformation; sequence ADAAQKQIQSLNKMCSNLLEKISKEERESES. Positions 142-151 are interaction with the Elongin BC complex; sequence SLNKMCSNLL. Disordered stretches follow at residues 156–176 and 193–268; these read KEER…FNPG and NWRP…PYQR. The span at 200–209 shows a compositional bias: gly residues; sequence SGPGQPGQPG.

Belongs to the Mediator complex subunit 8 family. As to quaternary structure, component of the Mediator complex, which is composed of MED1, MED4, MED6, MED7, MED8, MED9, MED10, MED11, MED12, MED13, MED13L, MED14, MED15, MED16, MED17, MED18, MED19, MED20, MED21, MED22, MED23, MED24, MED25, MED26, MED27, MED29, MED30, MED31, CCNC, CDK8 and CDC2L6/CDK11. The MED12, MED13, CCNC and CDK8 subunits form a distinct module termed the CDK8 module. Mediator containing the CDK8 module is less active than Mediator lacking this module in supporting transcriptional activation. Individual preparations of the Mediator complex lacking one or more distinct subunits have been variously termed ARC, CRSP, DRIP, PC2, SMCC and TRAP. May be part of a multisubunit E3 ubiquitin-protein ligase complex with the Elongin BC complex (ELOB and ELOC), CUL2 and RBX1.

It localises to the nucleus. It participates in protein modification; protein ubiquitination. Functionally, component of the Mediator complex, a coactivator involved in the regulated transcription of nearly all RNA polymerase II-dependent genes. Mediator functions as a bridge to convey information from gene-specific regulatory proteins to the basal RNA polymerase II transcription machinery. Mediator is recruited to promoters by direct interactions with regulatory proteins and serves as a scaffold for the assembly of a functional preinitiation complex with RNA polymerase II and the general transcription factors. May play a role as a target recruitment subunit in E3 ubiquitin-protein ligase complexes and thus in ubiquitination and subsequent proteasomal degradation of target proteins. The protein is Mediator of RNA polymerase II transcription subunit 8 (Med8) of Mus musculus (Mouse).